Reading from the N-terminus, the 236-residue chain is Transcriptional activator protein SolR (236 aa).

The 66-residue stretch at 169 to 234 (VPESNAVLTT…QAVVKAIATG (66 aa)) folds into the HTH luxR-type domain. The segment at residues 193-212 (AYEIGQILRISERTVNFHVN) is a DNA-binding region (H-T-H motif).

It belongs to the autoinducer-regulated transcriptional regulatory protein family.

This chain is Transcriptional activator protein SolR (solR), found in Ralstonia solanacearum (Pseudomonas solanacearum).